Here is a 1316-residue protein sequence, read N- to C-terminus: DNA-directed RNA polymerase subunit beta' (1316 aa).

Zn(2+) contacts are provided by C60, C62, C75, and C78. The segment at 183–209 (ELEEEGAKSDVRRKVRDGGEREMRQLR) is disordered. Residues D535, D537, and D539 each contribute to the Mg(2+) site. The Zn(2+) site is built by C890, C966, C973, and C976.

The protein belongs to the RNA polymerase beta' chain family. As to quaternary structure, the RNAP catalytic core consists of 2 alpha, 1 beta, 1 beta' and 1 omega subunit. When a sigma factor is associated with the core the holoenzyme is formed, which can initiate transcription. The cofactor is Mg(2+). Zn(2+) is required as a cofactor.

The enzyme catalyses RNA(n) + a ribonucleoside 5'-triphosphate = RNA(n+1) + diphosphate. DNA-dependent RNA polymerase catalyzes the transcription of DNA into RNA using the four ribonucleoside triphosphates as substrates. In Mycolicibacterium gilvum (strain PYR-GCK) (Mycobacterium gilvum (strain PYR-GCK)), this protein is DNA-directed RNA polymerase subunit beta'.